The following is a 119-amino-acid chain: Large ribosomal subunit protein uL18 (119 aa).

It belongs to the universal ribosomal protein uL18 family. As to quaternary structure, part of the 50S ribosomal subunit; part of the 5S rRNA/L5/L18/L25 subcomplex. Contacts the 5S and 23S rRNAs.

Functionally, this is one of the proteins that bind and probably mediate the attachment of the 5S RNA into the large ribosomal subunit, where it forms part of the central protuberance. This chain is Large ribosomal subunit protein uL18, found in Clostridium botulinum (strain Alaska E43 / Type E3).